A 567-amino-acid polypeptide reads, in one-letter code: Dihydrolipoyl dehydrogenase 2, chloroplastic (567 aa).

The transit peptide at 1 to 67 (MQSVLSLSFS…HIQSRRIEVS (67 aa)) directs the protein to the chloroplast. Residues 114–122 (EGDVVGGTC), K131, G197, and 221–223 (TGS) contribute to the FAD site. C122 and C127 are disulfide-bonded. Residues 258–265 (GSGYIGLE), E281, and G354 each bind NAD(+). FAD contacts are provided by residues D400 and 406 to 409 (MLAH). Residue H536 is the Proton acceptor of the active site.

This sequence belongs to the class-I pyridine nucleotide-disulfide oxidoreductase family. Homodimer. Part of the plastidial pyruvate dehydrogenase complex (PDC) containing multiple copies of three enzymatic components: pyruvate dehydrogenase (E1), dihydrolipoamide acetyltransferase (E2) and lipoamide dehydrogenase (E3). FAD serves as cofactor. In terms of tissue distribution, expressed mainly in flower buds and immature siliques, and to a lesser extent in flowers.

Its subcellular location is the plastid. It localises to the chloroplast stroma. The catalysed reaction is N(6)-[(R)-dihydrolipoyl]-L-lysyl-[protein] + NAD(+) = N(6)-[(R)-lipoyl]-L-lysyl-[protein] + NADH + H(+). Its function is as follows. Lipoamide dehydrogenase is a component of the plastidial pyruvate dehydrogenase complex (PDC). This chain is Dihydrolipoyl dehydrogenase 2, chloroplastic (LPD2), found in Arabidopsis thaliana (Mouse-ear cress).